Consider the following 634-residue polypeptide: 1-deoxy-D-xylulose-5-phosphate synthase (634 aa).

Thiamine diphosphate-binding positions include histidine 77 and 118–120 (GHA). Aspartate 149 lines the Mg(2+) pocket. Thiamine diphosphate-binding positions include 150–151 (AS), asparagine 178, tyrosine 289, and glutamate 371. Residue asparagine 178 participates in Mg(2+) binding.

This sequence belongs to the transketolase family. DXPS subfamily. In terms of assembly, homodimer. It depends on Mg(2+) as a cofactor. Thiamine diphosphate is required as a cofactor.

It carries out the reaction D-glyceraldehyde 3-phosphate + pyruvate + H(+) = 1-deoxy-D-xylulose 5-phosphate + CO2. The protein operates within metabolic intermediate biosynthesis; 1-deoxy-D-xylulose 5-phosphate biosynthesis; 1-deoxy-D-xylulose 5-phosphate from D-glyceraldehyde 3-phosphate and pyruvate: step 1/1. Its function is as follows. Catalyzes the acyloin condensation reaction between C atoms 2 and 3 of pyruvate and glyceraldehyde 3-phosphate to yield 1-deoxy-D-xylulose-5-phosphate (DXP). This Leptospira interrogans serogroup Icterohaemorrhagiae serovar copenhageni (strain Fiocruz L1-130) protein is 1-deoxy-D-xylulose-5-phosphate synthase.